A 237-amino-acid polypeptide reads, in one-letter code: Ribonuclease PH (237 aa).

Phosphate is bound by residues R86 and 124–126 (GTR).

This sequence belongs to the RNase PH family. As to quaternary structure, homohexameric ring arranged as a trimer of dimers.

It carries out the reaction tRNA(n+1) + phosphate = tRNA(n) + a ribonucleoside 5'-diphosphate. Functionally, phosphorolytic 3'-5' exoribonuclease that plays an important role in tRNA 3'-end maturation. Removes nucleotide residues following the 3'-CCA terminus of tRNAs; can also add nucleotides to the ends of RNA molecules by using nucleoside diphosphates as substrates, but this may not be physiologically important. Probably plays a role in initiation of 16S rRNA degradation (leading to ribosome degradation) during starvation. The chain is Ribonuclease PH from Beijerinckia indica subsp. indica (strain ATCC 9039 / DSM 1715 / NCIMB 8712).